The following is a 100-amino-acid chain: Urease subunit gamma (100 aa).

This sequence belongs to the urease gamma subunit family. Heterotrimer of UreA (gamma), UreB (beta) and UreC (alpha) subunits. Three heterotrimers associate to form the active enzyme.

It localises to the cytoplasm. The enzyme catalyses urea + 2 H2O + H(+) = hydrogencarbonate + 2 NH4(+). It participates in nitrogen metabolism; urea degradation; CO(2) and NH(3) from urea (urease route): step 1/1. The sequence is that of Urease subunit gamma from Streptomyces avermitilis (strain ATCC 31267 / DSM 46492 / JCM 5070 / NBRC 14893 / NCIMB 12804 / NRRL 8165 / MA-4680).